The chain runs to 157 residues: Ubiquitin-like protein 4A (157 aa).

In terms of domain architecture, Ubiquitin-like spans 1–76 (MQLTVKALQG…LNLVVKPLEK (76 aa)). A Glycyl lysine isopeptide (Lys-Gly) (interchain with G-Cter in ubiquitin) cross-link involves residue Lys48. Ser90 carries the phosphoserine modification. The interval 96-138 (WQLISKVLARHFSAADASRVLEQLQRDYQRSLSRLTLDDIERL) is required and sufficient for interaction with BAG6.

As to quaternary structure, component of the BAG6/BAT3 complex, at least composed of BAG6, UBL4A and GET4/TRC35. Interacts with BAG6; the interaction is direct and required for UBL4A protein stability. Interacts with USP13; may be indirect via BAG6. In terms of processing, polyubiquitinated. Ubiquitination by AMFR and deubiquitination by USP13 may regulate the interaction between the BAG6/BAT complex and SGTA and therefore may regulate client proteins fate.

The protein localises to the cytoplasm. The protein resides in the cytosol. Its subcellular location is the nucleus. In terms of biological role, as part of a cytosolic protein quality control complex, the BAG6/BAT3 complex, maintains misfolded and hydrophobic patches-containing proteins in a soluble state and participates in their proper delivery to the endoplasmic reticulum or alternatively can promote their sorting to the proteasome where they undergo degradation. The BAG6/BAT3 complex is involved in the post-translational delivery of tail-anchored/type II transmembrane proteins to the endoplasmic reticulum membrane. Recruited to ribosomes, it interacts with the transmembrane region of newly synthesized tail-anchored proteins and together with SGTA and ASNA1 mediates their delivery to the endoplasmic reticulum. Client proteins that cannot be properly delivered to the endoplasmic reticulum are ubiquitinated and sorted to the proteasome. Similarly, the BAG6/BAT3 complex also functions as a sorting platform for proteins of the secretory pathway that are mislocalized to the cytosol either delivering them to the proteasome for degradation or to the endoplasmic reticulum. The BAG6/BAT3 complex also plays a role in the endoplasmic reticulum-associated degradation (ERAD), a quality control mechanism that eliminates unwanted proteins of the endoplasmic reticulum through their retrotranslocation to the cytosol and their targeting to the proteasome. It maintains these retrotranslocated proteins in an unfolded yet soluble state condition in the cytosol to ensure their proper delivery to the proteasome. In Plecturocebus moloch (Dusky titi monkey), this protein is Ubiquitin-like protein 4A (UBL4A).